Here is a 252-residue protein sequence, read N- to C-terminus: Ferritin-2, chloroplastic (252 aa).

Residues 1 to 43 constitute a chloroplast transit peptide; that stretch reads MMLRVSSSPAAAVANHLSGGAAATTAPARVTAQRSGVSLSAAA. The tract at residues 44–80 is extension peptide (EP); sequence AAGKGKEVLSGVVFQPFEEIKGELALVPQSPDRSLAR. Residues 81–234 enclose the Ferritin-like diiron domain; the sequence is HKFVDDCEAA…KYVAQLRRVG (154 aa). Fe cation is bound by residues glutamate 98, glutamate 133, histidine 136, glutamate 182, and glutamine 216.

Belongs to the ferritin family. As to quaternary structure, oligomer of 24 subunits. There are two types of subunits: L (light) chain and H (heavy) chain. The major chain can be light or heavy, depending on the species and tissue type. The functional molecule forms a roughly spherical shell with a diameter of 12 nm and contains a central cavity into which the insoluble mineral iron core is deposited. Ferritins accumulate in seed during maturation. Then, they are degraded during the first days of germination. Present in roots and leaves after iron treatment.

The protein resides in the plastid. Its subcellular location is the chloroplast. The enzyme catalyses 4 Fe(2+) + O2 + 4 H(+) = 4 Fe(3+) + 2 H2O. Functionally, stores iron in a soluble, non-toxic, readily available form. Important for iron homeostasis. Has ferroxidase activity. Iron is taken up in the ferrous form and deposited as ferric hydroxides after oxidation. The polypeptide is Ferritin-2, chloroplastic (FER2) (Zea mays (Maize)).